Here is a 72-residue protein sequence, read N- to C-terminus: Translation initiation factor IF-1 (72 aa).

Residues 1 to 72 (MAKEEMLEFP…TKGRINYRFK (72 aa)) form the S1-like domain.

Belongs to the IF-1 family. In terms of assembly, component of the 30S ribosomal translation pre-initiation complex which assembles on the 30S ribosome in the order IF-2 and IF-3, IF-1 and N-formylmethionyl-tRNA(fMet); mRNA recruitment can occur at any time during PIC assembly.

The protein resides in the cytoplasm. In terms of biological role, one of the essential components for the initiation of protein synthesis. Stabilizes the binding of IF-2 and IF-3 on the 30S subunit to which N-formylmethionyl-tRNA(fMet) subsequently binds. Helps modulate mRNA selection, yielding the 30S pre-initiation complex (PIC). Upon addition of the 50S ribosomal subunit IF-1, IF-2 and IF-3 are released leaving the mature 70S translation initiation complex. The chain is Translation initiation factor IF-1 from Jannaschia sp. (strain CCS1).